The chain runs to 61 residues: Small ribosomal subunit protein uS14 (61 aa).

Residues C24, C27, C40, and C43 each coordinate Zn(2+).

This sequence belongs to the universal ribosomal protein uS14 family. Zinc-binding uS14 subfamily. In terms of assembly, part of the 30S ribosomal subunit. Contacts proteins S3 and S10. Requires Zn(2+) as cofactor.

Its function is as follows. Binds 16S rRNA, required for the assembly of 30S particles and may also be responsible for determining the conformation of the 16S rRNA at the A site. The protein is Small ribosomal subunit protein uS14 of Aliarcobacter butzleri (strain RM4018) (Arcobacter butzleri).